The following is a 133-amino-acid chain: Fatty acid-binding protein, heart (133 aa).

Val2 carries the post-translational modification N-acetylvaline. A Phosphothreonine modification is found at Thr8. Tyr20 is modified (phosphotyrosine; by Tyr-kinases). Ser23 bears the Phosphoserine mark. Thr30 is modified (phosphothreonine). Residue Ser83 is modified to Phosphoserine. Arg127–Tyr129 is a binding site for (9Z)-octadecenoate. Residue Arg127–Tyr129 participates in hexadecanoate binding. Residue Arg127–Tyr129 coordinates octadecanoate.

The protein belongs to the calycin superfamily. Fatty-acid binding protein (FABP) family.

The protein resides in the cytoplasm. FABPs are thought to play a role in the intracellular transport of long-chain fatty acids and their acyl-CoA esters. This chain is Fatty acid-binding protein, heart (FABP3), found in Homo sapiens (Human).